The following is a 325-amino-acid chain: Secreted frizzled-related protein 3 (325 aa).

The signal sequence occupies residues 1–32 (MVCGSPGGMLLLRAGLLALAALCLLRVPGARA). The FZ domain maps to 33–150 (AACEPVRIPL…VYDRGVCISP (118 aa)). 5 disulfides stabilise this stretch: Cys35/Cys96, Cys43/Cys89, Cys80/Cys119, Cys108/Cys147, and Cys112/Cys136. The N-linked (GlcNAc...) asparagine glycan is linked to Asn49. Residues 178–298 (CKCKPIRATQ…WDMKLRHLGL (121 aa)) enclose the NTR domain. The interval 297 to 325 (GLSKSDSSNSDSTQSQKSGRNSNPRQARN) is disordered. Residues 299-314 (SKSDSSNSDSTQSQKS) are compositionally biased toward low complexity. Polar residues predominate over residues 315-325 (GRNSNPRQARN).

The protein belongs to the secreted frizzled-related protein (sFRP) family. As to quaternary structure, interacts with MYOC. As to expression, expressed primarily in the cartilaginous cores of the long bone during embryonic and fetal development and in the appendicular skeleton (6-13 weeks). At 13 weeks of gestation, transcripts were present in early chondroblasts of the tarsal bones of the foot, the carpal bones of the hands and the epiphysis of long bones. Highly expressed in placenta and heart, followed by brain, skeletal muscle, kidney and pancreas. Weakly expressed in lung and liver.

The protein localises to the secreted. Its function is as follows. Soluble frizzled-related proteins (sFRPS) function as modulators of Wnt signaling through direct interaction with Wnts. They have a role in regulating cell growth and differentiation in specific cell types. SFRP3/FRZB appears to be involved in limb skeletogenesis. Antagonist of Wnt8 signaling. Regulates chondrocyte maturation and long bone development. In Homo sapiens (Human), this protein is Secreted frizzled-related protein 3 (FRZB).